We begin with the raw amino-acid sequence, 79 residues long: Small ribosomal subunit protein bS16c (79 aa).

This sequence belongs to the bacterial ribosomal protein bS16 family.

It localises to the plastid. The protein localises to the chloroplast. In Staurastrum punctulatum (Green alga), this protein is Small ribosomal subunit protein bS16c.